The primary structure comprises 68 residues: MARVTVEDCLEKVDNRFMLVMMASKRVKQLYKGAKPLIDPKNNRHVVTSLREIAAGKLSAELSSKRSA.

Belongs to the RNA polymerase subunit omega family. As to quaternary structure, the RNAP catalytic core consists of 2 alpha, 1 beta, 1 beta' and 1 omega subunit. When a sigma factor is associated with the core the holoenzyme is formed, which can initiate transcription.

The catalysed reaction is RNA(n) + a ribonucleoside 5'-triphosphate = RNA(n+1) + diphosphate. Promotes RNA polymerase assembly. Latches the N- and C-terminal regions of the beta' subunit thereby facilitating its interaction with the beta and alpha subunits. This chain is DNA-directed RNA polymerase subunit omega, found in Trichlorobacter lovleyi (strain ATCC BAA-1151 / DSM 17278 / SZ) (Geobacter lovleyi).